Reading from the N-terminus, the 200-residue chain is Urease accessory protein UreE (200 aa).

The interval 171–200 (HHGHAHPHPHDHDHQHGPGCAHGRHGHDHH) is disordered.

The protein belongs to the UreE family.

It is found in the cytoplasm. Its function is as follows. Involved in urease metallocenter assembly. Binds nickel. Probably functions as a nickel donor during metallocenter assembly. This Burkholderia vietnamiensis (strain G4 / LMG 22486) (Burkholderia cepacia (strain R1808)) protein is Urease accessory protein UreE.